Reading from the N-terminus, the 79-residue chain is D-alanyl carrier protein (79 aa).

Residues 1-77 form the Carrier domain; the sequence is MDIKAEVIEI…KIVEGVTELR (77 aa). Ser35 is modified (O-(pantetheine 4'-phosphoryl)serine).

It belongs to the DltC family. 4'-phosphopantetheine is transferred from CoA to a specific serine of apo-DCP.

The protein resides in the cytoplasm. The protein operates within cell wall biogenesis; lipoteichoic acid biosynthesis. Carrier protein involved in the D-alanylation of lipoteichoic acid (LTA). The loading of thioester-linked D-alanine onto DltC is catalyzed by D-alanine--D-alanyl carrier protein ligase DltA. The DltC-carried D-alanyl group is further transferred to cell membrane phosphatidylglycerol (PG) by forming an ester bond, probably catalyzed by DltD. D-alanylation of LTA plays an important role in modulating the properties of the cell wall in Gram-positive bacteria, influencing the net charge of the cell wall. In Streptococcus sanguinis (strain SK36), this protein is D-alanyl carrier protein.